The sequence spans 282 residues: Nucleotide-binding protein PXO_02223 (282 aa).

5–12 serves as a coordination point for ATP; it reads GLSGSGKS. 57 to 60 lines the GTP pocket; it reads DVRS.

Belongs to the RapZ-like family.

Displays ATPase and GTPase activities. The sequence is that of Nucleotide-binding protein PXO_02223 from Xanthomonas oryzae pv. oryzae (strain PXO99A).